The sequence spans 106 residues: U1-lycotoxin-Ls1z (106 aa).

A signal peptide spans 1–19; that stretch reads MKVLVVVALLVTLISYSSS. Residues 20 to 40 constitute a propeptide that is removed on maturation; sequence EGIDDLEADELLSLMANEQTR. Cystine bridges form between Cys-43/Cys-58, Cys-50/Cys-67, Cys-57/Cys-85, and Cys-69/Cys-83.

The protein belongs to the neurotoxin 19 (CSTX) family. 03 subfamily. Expressed by the venom gland.

It localises to the secreted. In Lycosa singoriensis (Wolf spider), this protein is U1-lycotoxin-Ls1z.